A 70-amino-acid chain; its full sequence is MDNIEHRVEELEMKLAFQDGTIEELNQQVIKLNDVVALQQEQLRLLLNKLQSVEPSNMASQADETPPPHY.

This sequence belongs to the SlyX family.

This is Protein SlyX homolog from Shewanella piezotolerans (strain WP3 / JCM 13877).